The chain runs to 390 residues: RNA-binding motif protein, X chromosome (390 aa).

Position 1 is an N-acetylmethionine; in Heterogeneous nuclear ribonucleoprotein G; alternate (methionine 1). The residue at position 2 (valine 2) is an N-acetylvaline; in Heterogeneous nuclear ribonucleoprotein G, N-terminally processed. The region spanning 8–86 is the RRM domain; that stretch reads GKLFIGGLNT…KAIKVEQATK (79 aa). Lysine 22 is covalently cross-linked (Glycyl lysine isopeptide (Lys-Gly) (interchain with G-Cter in SUMO2)). The residue at position 30 (lysine 30) is an N6-acetyllysine. The segment at 58-390 is disordered; that stretch reads SPADAKDAAR…RSDRGGRSRY (333 aa). Basic and acidic residues predominate over residues 60–80; the sequence is ADAKDAARDMNGKSLDGKAIK. Residues lysine 80 and lysine 86 each participate in a glycyl lysine isopeptide (Lys-Gly) (interchain with G-Cter in SUMO2) cross-link. 2 positions are modified to phosphoserine: serine 88 and serine 91. The segment covering 109 to 120 has biased composition (gly residues); sequence LRGGRGGSGGTR. An omega-N-methylarginine mark is found at arginine 125, arginine 144, and arginine 164. Over residues 151–164 the composition is skewed to pro residues; that stretch reads RGPPPRSGGPPPKR. Phosphoserine is present on serine 165. The residue at position 172 (arginine 172) is an Omega-N-methylarginine. Serine 174 carries the post-translational modification Phosphoserine. Basic and acidic residues-rich tracts occupy residues 194–215 and 241–274; these read PRRE…DGYS and YTYR…DYSD. 4 positions are modified to phosphoserine: serine 261, serine 329, serine 330, and serine 332. The span at 323–337 shows a compositional bias: low complexity; that stretch reads SRDSYTSSRSDLYSS. A compositionally biased stretch (basic and acidic residues) spans 338-347; it reads GRDRVGRQER. Serine 352 is subject to Phosphoserine. Over residues 362–371 the composition is skewed to low complexity; that stretch reads DSYSSSSRGA. The segment covering 380-390 has biased composition (basic and acidic residues); the sequence is SRSDRGGRSRY.

In terms of assembly, homomultimer. Found in the supraspliceosome complex Identified in the spliceosome C complex. Interacts with KHDRBS3. Forms a complex with ILF2, ILF3, YLPM1, KHDRBS1, NCOA5 and PPP1CA. Interacts with SAFB/SAFB1. Interacts with ERAP1; the interaction is RNA-independent. Interacts with CLK2, KHDRBS2, SAFB, TRA2B and YTHDC1. Interacts with PPIA/CYPA. In terms of processing, O-glycosylated. Arg-182 is dimethylated, probably to asymmetric dimethylarginine. As to expression, expressed in brain, spleen, lung, liver, kidney, testis and heart. Weakly expressed in skeletal muscle (at protein level).

It is found in the nucleus. Functionally, RNA-binding protein that plays several role in the regulation of pre- and post-transcriptional processes. Implicated in tissue-specific regulation of gene transcription and alternative splicing of several pre-mRNAs. Binds to and stimulates transcription from the tumor suppressor TXNIP gene promoter; may thus be involved in tumor suppression. When associated with SAFB, binds to and stimulates transcription from the SREBF1 promoter. Associates with nascent mRNAs transcribed by RNA polymerase II. Component of the supraspliceosome complex that regulates pre-mRNA alternative splice site selection. Can either activate or suppress exon inclusion; acts additively with TRA2B to promote exon 7 inclusion of the survival motor neuron SMN. Represses the splicing of MAPT/Tau exon 10. Binds preferentially to single-stranded 5'-CC[A/C]-rich RNA sequence motifs localized in a single-stranded conformation; probably binds RNA as a homodimer. Binds non-specifically to pre-mRNAs. Also plays a role in the cytoplasmic TNFR1 trafficking pathways; promotes both the IL-1-beta-mediated inducible proteolytic cleavage of TNFR1 ectodomains and the release of TNFR1 exosome-like vesicles to the extracellular compartment. The protein is RNA-binding motif protein, X chromosome (Rbmx) of Rattus norvegicus (Rat).